The sequence spans 351 residues: Histidinol-phosphate aminotransferase (351 aa).

Lys-213 carries the N6-(pyridoxal phosphate)lysine modification.

Belongs to the class-II pyridoxal-phosphate-dependent aminotransferase family. Histidinol-phosphate aminotransferase subfamily. In terms of assembly, homodimer. It depends on pyridoxal 5'-phosphate as a cofactor.

It carries out the reaction L-histidinol phosphate + 2-oxoglutarate = 3-(imidazol-4-yl)-2-oxopropyl phosphate + L-glutamate. The protein operates within amino-acid biosynthesis; L-histidine biosynthesis; L-histidine from 5-phospho-alpha-D-ribose 1-diphosphate: step 7/9. The sequence is that of Histidinol-phosphate aminotransferase from Thermoanaerobacter pseudethanolicus (strain ATCC 33223 / 39E) (Clostridium thermohydrosulfuricum).